Consider the following 105-residue polypeptide: NADH-quinone oxidoreductase subunit K (105 aa).

A run of 3 helical transmembrane segments spans residues 4–24 (LTHY…GVIV), 28–48 (IIVI…SLVA), and 66–86 (LSIF…ALIV).

It belongs to the complex I subunit 4L family. In terms of assembly, NDH-1 is composed of 14 different subunits. Subunits NuoA, H, J, K, L, M, N constitute the membrane sector of the complex.

It is found in the cell inner membrane. The enzyme catalyses a quinone + NADH + 5 H(+)(in) = a quinol + NAD(+) + 4 H(+)(out). NDH-1 shuttles electrons from NADH, via FMN and iron-sulfur (Fe-S) centers, to quinones in the respiratory chain. The immediate electron acceptor for the enzyme in this species is believed to be ubiquinone. Couples the redox reaction to proton translocation (for every two electrons transferred, four hydrogen ions are translocated across the cytoplasmic membrane), and thus conserves the redox energy in a proton gradient. This chain is NADH-quinone oxidoreductase subunit K, found in Akkermansia muciniphila (strain ATCC BAA-835 / DSM 22959 / JCM 33894 / BCRC 81048 / CCUG 64013 / CIP 107961 / Muc).